The following is a 228-amino-acid chain: Superoxide dismutase [Mn], mitochondrial (228 aa).

Residues 1–24 constitute a mitochondrion transit peptide; the sequence is MALRNLMTKKPFAGILTFRQQLRC. 4 residues coordinate Mn(2+): histidine 52, histidine 100, aspartate 189, and histidine 193.

The protein belongs to the iron/manganese superoxide dismutase family. In terms of assembly, homotetramer. The cofactor is Mn(2+).

The protein resides in the mitochondrion matrix. The catalysed reaction is 2 superoxide + 2 H(+) = H2O2 + O2. Destroys superoxide anion radicals which are normally produced within the cells and which are toxic to biological systems. The polypeptide is Superoxide dismutase [Mn], mitochondrial (SODA) (Capsicum annuum (Capsicum pepper)).